A 451-amino-acid polypeptide reads, in one-letter code: Probable tyrosyl-DNA phosphodiesterase (451 aa).

A disordered region spans residues 1–34 (MKRTIQETPGPSSTTVPPPKKLNSQRNGSNLEPG). A compositionally biased stretch (polar residues) spans 22 to 32 (LNSQRNGSNLE). H131 functions as the Nucleophile in the catalytic mechanism. Substrate is bound at residue K133. The tract at residues 266-269 (SIGS) is interaction with DNA. Residue H356 is the Proton donor/acceptor of the active site. Substrate is bound at residue K358.

The protein belongs to the tyrosyl-DNA phosphodiesterase family.

The protein resides in the nucleus. Functionally, DNA repair enzyme that can remove a variety of covalent adducts from DNA through hydrolysis of a 3'-phosphodiester bond, giving rise to DNA with a free 3' phosphate. Catalyzes the hydrolysis of dead-end complexes between DNA and the topoisomerase I active site tyrosine residue. Hydrolyzes 3'-phosphoglycolates on protruding 3' ends on DNA double-strand breaks due to DNA damage by radiation and free radicals. Acts on blunt-ended double-strand DNA breaks and on single-stranded DNA. May have low 3'exonuclease activity and may be able to remove a single nucleoside from the 3'end of DNA and RNA molecules with 3'hydroxyl groups. Has no exonuclease activity towards DNA or RNA with a 3'phosphate. This Caenorhabditis elegans protein is Probable tyrosyl-DNA phosphodiesterase.